We begin with the raw amino-acid sequence, 117 residues long: Large ribosomal subunit protein uL22 (117 aa).

This sequence belongs to the universal ribosomal protein uL22 family. Part of the 50S ribosomal subunit.

This protein binds specifically to 23S rRNA; its binding is stimulated by other ribosomal proteins, e.g. L4, L17, and L20. It is important during the early stages of 50S assembly. It makes multiple contacts with different domains of the 23S rRNA in the assembled 50S subunit and ribosome. Its function is as follows. The globular domain of the protein is located near the polypeptide exit tunnel on the outside of the subunit, while an extended beta-hairpin is found that lines the wall of the exit tunnel in the center of the 70S ribosome. This is Large ribosomal subunit protein uL22 from Staphylococcus epidermidis (strain ATCC 35984 / DSM 28319 / BCRC 17069 / CCUG 31568 / BM 3577 / RP62A).